A 615-amino-acid chain; its full sequence is Forkhead box protein O (615 aa).

Disordered regions lie at residues 39–77 (RARSNTWPCPRPENFVEPTDELDSTKASNQQLAPGDSQQ), 182–205 (KSVRRRAASMETSRYEKRRGRAKK), 217–269 (GLND…RLSP), 318–359 (FSAA…APGY), and 389–409 (NSVTTTMSPAYPNSEPSSDSL). Phosphothreonine; by PKB/AKT1 is present on T44. The segment covering 63-77 (TKASNQQLAPGDSQQ) has biased composition (polar residues). S75 is subject to Phosphoserine. Residues 95–201 (WGNLSYADLI…ETSRYEKRRG (107 aa)) constitute a DNA-binding region (fork-head). S190 is modified (phosphoserine; by PKB/AKT1). Composition is skewed to polar residues over residues 221–230 (ATPSPSSSVS) and 256–265 (RASSNASSCG). Residue S259 is modified to Phosphoserine; by PKB/AKT1. S262, S263, and S268 each carry phosphoserine. The segment covering 326-335 (SQPPPPPYQP) has biased composition (pro residues). The span at 336 to 351 (PQHQQAQQQQQQSPYA) shows a compositional bias: low complexity.

As to quaternary structure, interacts with melt.

The protein localises to the cytoplasm. It is found in the nucleus. Transcription factor involved in the regulation of the insulin signaling pathway. Consistently activates both the downstream target Thor\d4EBP and the feedback control target InR. Involved in negative regulation of the cell cycle, modulating cell growth and proliferation. In response to cellular stresses, such as nutrient deprivation or increased levels of reactive oxygen species, foxo is activated and inhibits growth through the action of target genes such as Thor. Foxo activated in the adult fat body can regulate lifespan in adults; an insulin peptide itself may function as one secondary messenger of insulin-regulated aging. Also regulates Lip4, homolog of human acid lipases, thereby acting as a key modulator of lipid metabolism by insulin signaling and integrates insulin responses to glucose and lipid homeostasis. The protein is Forkhead box protein O of Drosophila erecta (Fruit fly).